The chain runs to 436 residues: ATP-dependent protease ATPase subunit HslU (436 aa).

Residues I18, 60–65, D250, E314, and R386 contribute to the ATP site; that span reads GVGKTE.

This sequence belongs to the ClpX chaperone family. HslU subfamily. In terms of assembly, a double ring-shaped homohexamer of HslV is capped on each side by a ring-shaped HslU homohexamer. The assembly of the HslU/HslV complex is dependent on binding of ATP.

The protein localises to the cytoplasm. Its function is as follows. ATPase subunit of a proteasome-like degradation complex; this subunit has chaperone activity. The binding of ATP and its subsequent hydrolysis by HslU are essential for unfolding of protein substrates subsequently hydrolyzed by HslV. HslU recognizes the N-terminal part of its protein substrates and unfolds these before they are guided to HslV for hydrolysis. The protein is ATP-dependent protease ATPase subunit HslU of Mesorhizobium japonicum (strain LMG 29417 / CECT 9101 / MAFF 303099) (Mesorhizobium loti (strain MAFF 303099)).